Reading from the N-terminus, the 835-residue chain is Leucine--tRNA ligase (835 aa).

The 'HIGH' region motif lies at 42 to 52 (PYPSGRIHMGH). Positions 612–616 (KMSKS) match the 'KMSKS' region motif. An ATP-binding site is contributed by lysine 615.

It belongs to the class-I aminoacyl-tRNA synthetase family.

The protein localises to the cytoplasm. It carries out the reaction tRNA(Leu) + L-leucine + ATP = L-leucyl-tRNA(Leu) + AMP + diphosphate. In Rhizorhabdus wittichii (strain DSM 6014 / CCUG 31198 / JCM 15750 / NBRC 105917 / EY 4224 / RW1) (Sphingomonas wittichii), this protein is Leucine--tRNA ligase.